The following is a 586-amino-acid chain: Phosphomethylpyrimidine synthase (586 aa).

Residues 1–58 (MKQSVSAEQIELKSSLPGSKKVYVDGTREGMKVPMREIEQSDTNGVQNPPIRVYDTSG) form a disordered region. Over residues 22–39 (VYVDGTREGMKVPMREIE) the composition is skewed to basic and acidic residues. Substrate-binding positions include Asn193, Met222, Tyr251, His287, 307-309 (SRG), 348-351 (DGLR), and Glu387. His391 provides a ligand contact to Zn(2+). Tyr414 provides a ligand contact to substrate. His455 serves as a coordination point for Zn(2+). [4Fe-4S] cluster-binding residues include Cys535, Cys538, and Cys543.

Belongs to the ThiC family. It depends on [4Fe-4S] cluster as a cofactor.

It carries out the reaction 5-amino-1-(5-phospho-beta-D-ribosyl)imidazole + S-adenosyl-L-methionine = 4-amino-2-methyl-5-(phosphooxymethyl)pyrimidine + CO + 5'-deoxyadenosine + formate + L-methionine + 3 H(+). The protein operates within cofactor biosynthesis; thiamine diphosphate biosynthesis. Its function is as follows. Catalyzes the synthesis of the hydroxymethylpyrimidine phosphate (HMP-P) moiety of thiamine from aminoimidazole ribotide (AIR) in a radical S-adenosyl-L-methionine (SAM)-dependent reaction. This chain is Phosphomethylpyrimidine synthase, found in Bacillus mycoides (strain KBAB4) (Bacillus weihenstephanensis).